The sequence spans 872 residues: Alanine--tRNA ligase (872 aa).

Residues H563, H567, C665, and H669 each coordinate Zn(2+).

Belongs to the class-II aminoacyl-tRNA synthetase family. Requires Zn(2+) as cofactor.

It is found in the cytoplasm. The enzyme catalyses tRNA(Ala) + L-alanine + ATP = L-alanyl-tRNA(Ala) + AMP + diphosphate. In terms of biological role, catalyzes the attachment of alanine to tRNA(Ala) in a two-step reaction: alanine is first activated by ATP to form Ala-AMP and then transferred to the acceptor end of tRNA(Ala). Also edits incorrectly charged Ser-tRNA(Ala) and Gly-tRNA(Ala) via its editing domain. The polypeptide is Alanine--tRNA ligase (Bacteroides thetaiotaomicron (strain ATCC 29148 / DSM 2079 / JCM 5827 / CCUG 10774 / NCTC 10582 / VPI-5482 / E50)).